A 342-amino-acid polypeptide reads, in one-letter code: N-acetyl-gamma-glutamyl-phosphate reductase (342 aa).

Cys156 is an active-site residue.

This sequence belongs to the NAGSA dehydrogenase family. Type 1 subfamily.

The protein localises to the cytoplasm. It catalyses the reaction N-acetyl-L-glutamate 5-semialdehyde + phosphate + NADP(+) = N-acetyl-L-glutamyl 5-phosphate + NADPH + H(+). It participates in amino-acid biosynthesis; L-arginine biosynthesis; N(2)-acetyl-L-ornithine from L-glutamate: step 3/4. Its function is as follows. Catalyzes the NADPH-dependent reduction of N-acetyl-5-glutamyl phosphate to yield N-acetyl-L-glutamate 5-semialdehyde. This chain is N-acetyl-gamma-glutamyl-phosphate reductase, found in Pseudoalteromonas atlantica (strain T6c / ATCC BAA-1087).